A 234-amino-acid chain; its full sequence is Synaptogyrin-1 (234 aa).

The residue at position 1 (M1) is an N-acetylmethionine. The Cytoplasmic segment spans residues 1–23; it reads MEGGAYGAGKAGGAFDPYTLVRQ. The region spanning 20 to 173 is the MARVEL domain; that stretch reads LVRQPHTILR…QAVLAFQRYQ (154 aa). A helical membrane pass occupies residues 24–44; sequence PHTILRVVSWVFSIVVFGSIV. Residues 45–71 are Lumenal-facing; sequence NEGYLNNPEEEEEFCIYNRNPNACSYG. Residues 72–92 form a helical membrane-spanning segment; the sequence is VTVGVLAFLTCLLYLALDVYF. Residues 93–103 lie on the Cytoplasmic side of the membrane; the sequence is PQISSVKDRKK. The chain crosses the membrane as a helical span at residues 104 to 124; sequence AVLSDIGVSAFWAFFWFVGFC. Over 125–148 the chain is Lumenal; the sequence is FLANQWQVSKPKDNPLNEGTDAAR. A helical transmembrane segment spans residues 149–169; that stretch reads AAIAFSFFSIFTWAGQAVLAF. Topologically, residues 170-234 are cytoplasmic; the sequence is QRYQIGADSA…EPQGYQSQGY (65 aa). Residues 201–234 are disordered; that stretch reads EPSAGSDPAGMGGTYQHPANAFDAEPQGYQSQGY.

Belongs to the synaptogyrin family.

It is found in the cytoplasmic vesicle. The protein localises to the secretory vesicle. The protein resides in the synaptic vesicle membrane. Its subcellular location is the melanosome. Functionally, may play a role in regulated exocytosis. Modulates the localization of synaptophysin/SYP into synaptic-like microvesicles and may therefore play a role in synaptic-like microvesicle formation and/or maturation. Involved in the regulation of short-term and long-term synaptic plasticity. The protein is Synaptogyrin-1 of Mus musculus (Mouse).